The primary structure comprises 188 residues: Ribosome maturation factor RimM (188 aa).

The PRC barrel domain occupies 103–177 (EEGWYYADLI…RVVIDPPAGT (75 aa)).

Belongs to the RimM family. Binds ribosomal protein uS19.

It localises to the cytoplasm. Functionally, an accessory protein needed during the final step in the assembly of 30S ribosomal subunit, possibly for assembly of the head region. Essential for efficient processing of 16S rRNA. May be needed both before and after RbfA during the maturation of 16S rRNA. It has affinity for free ribosomal 30S subunits but not for 70S ribosomes. The protein is Ribosome maturation factor RimM of Parvibaculum lavamentivorans (strain DS-1 / DSM 13023 / NCIMB 13966).